We begin with the raw amino-acid sequence, 508 residues long: Probable cytosol aminopeptidase (508 aa).

2 residues coordinate Mn(2+): Lys-274 and Asp-279. Lys-286 is a catalytic residue. Mn(2+) is bound by residues Asp-297, Asp-356, and Glu-358. Arg-360 is a catalytic residue.

This sequence belongs to the peptidase M17 family. Requires Mn(2+) as cofactor.

Its subcellular location is the cytoplasm. It catalyses the reaction Release of an N-terminal amino acid, Xaa-|-Yaa-, in which Xaa is preferably Leu, but may be other amino acids including Pro although not Arg or Lys, and Yaa may be Pro. Amino acid amides and methyl esters are also readily hydrolyzed, but rates on arylamides are exceedingly low.. It carries out the reaction Release of an N-terminal amino acid, preferentially leucine, but not glutamic or aspartic acids.. Functionally, presumably involved in the processing and regular turnover of intracellular proteins. Catalyzes the removal of unsubstituted N-terminal amino acids from various peptides. The protein is Probable cytosol aminopeptidase of Cutibacterium acnes (strain DSM 16379 / KPA171202) (Propionibacterium acnes).